Reading from the N-terminus, the 156-residue chain is ADP-ribose 1''-phosphate phosphatase (156 aa).

The 156-residue stretch at Met-1 to Ile-156 folds into the Macro domain. Substrate-binding positions include Gly-7–Leu-9, Ala-25–Asn-27, Trp-32–Ala-37, and Ile-127–Gly-133.

Belongs to the POA1 family.

The catalysed reaction is ADP-alpha-D-ribose 1''-phosphate + H2O = ADP-D-ribose + phosphate. Its function is as follows. Highly specific phosphatase involved in the metabolism of ADP-ribose 1''-phosphate (Appr1p) which is produced as a consequence of tRNA splicing. This chain is ADP-ribose 1''-phosphate phosphatase (POA1), found in Candida albicans (strain SC5314 / ATCC MYA-2876) (Yeast).